A 404-amino-acid chain; its full sequence is 8-amino-7-oxononanoate synthase (404 aa).

Arg-20 serves as a coordination point for substrate. 116–117 is a pyridoxal 5'-phosphate binding site; sequence GY. His-141 provides a ligand contact to substrate. 3 residues coordinate pyridoxal 5'-phosphate: Ser-187, His-215, and Thr-243. Lys-246 carries the post-translational modification N6-(pyridoxal phosphate)lysine. Thr-366 is a substrate binding site.

It belongs to the class-II pyridoxal-phosphate-dependent aminotransferase family. BioF subfamily. As to quaternary structure, homodimer. It depends on pyridoxal 5'-phosphate as a cofactor.

The catalysed reaction is 6-carboxyhexanoyl-[ACP] + L-alanine + H(+) = (8S)-8-amino-7-oxononanoate + holo-[ACP] + CO2. It functions in the pathway cofactor biosynthesis; biotin biosynthesis. Its function is as follows. Catalyzes the decarboxylative condensation of pimeloyl-[acyl-carrier protein] and L-alanine to produce 8-amino-7-oxononanoate (AON), [acyl-carrier protein], and carbon dioxide. The sequence is that of 8-amino-7-oxononanoate synthase from Cupriavidus taiwanensis (strain DSM 17343 / BCRC 17206 / CCUG 44338 / CIP 107171 / LMG 19424 / R1) (Ralstonia taiwanensis (strain LMG 19424)).